The primary structure comprises 117 residues: Protein TCL1B2 (117 aa).

The protein belongs to the TCL1 family.

This is Protein TCL1B2 (Tcl1b2) from Mus musculus (Mouse).